The sequence spans 281 residues: Undecaprenyl-diphosphatase 1 (281 aa).

6 helical membrane-spanning segments follow: residues Trp-95–Ile-115, Phe-119–Ala-139, Leu-152–Val-172, Phe-195–Ala-215, Leu-227–Leu-247, and Phe-256–Thr-276.

Belongs to the UppP family.

Its subcellular location is the cell membrane. It carries out the reaction di-trans,octa-cis-undecaprenyl diphosphate + H2O = di-trans,octa-cis-undecaprenyl phosphate + phosphate + H(+). In terms of biological role, catalyzes the dephosphorylation of undecaprenyl diphosphate (UPP). Confers resistance to bacitracin. The sequence is that of Undecaprenyl-diphosphatase 1 from Corynebacterium jeikeium (strain K411).